A 279-amino-acid chain; its full sequence is 2'-N-acetylparomamine deacetylase (279 aa).

Zn(2+)-binding residues include His31, Asp34, and His157. The tract at residues 245–279 (PRRWTGGTAGAGHAAGRRGAPHTERVWTPAPAGAR) is disordered. Low complexity predominate over residues 246-258 (RRWTGGTAGAGHA).

This sequence belongs to the PIGL family. Zn(2+) is required as a cofactor.

The catalysed reaction is 2'-N-acetylparomamine + H2O = paromamine + acetate. It carries out the reaction 2'''-acetyl-6'''-hydroxyneomycin C + H2O = 6'''-deamino-6'''-hydroxyneomycin C + acetate. Its pathway is antibiotic biosynthesis; neomycin biosynthesis. Deacetylase involved in the biosynthesis of neomycin by mediating 2 steps of the pathway. Deacetylates both 2'-N-acetylparomamine and 2'''-acetyl-6'''-hydroxyneomycin C. In Streptomyces fradiae (Streptomyces roseoflavus), this protein is 2'-N-acetylparomamine deacetylase (neoL).